The primary structure comprises 120 residues: Immunogenic miracidial antigen 5D (120 aa).

Residues 41-120 (HIDVGDEDYH…PKKYGSGYKH (80 aa)) form a disordered region. Acidic residues predominate over residues 45–66 (GDEDYHDGDDDVDYTDDVDDVD).

This sequence belongs to the immunogenic miracidial antigen family.

This chain is Immunogenic miracidial antigen 5D (5D), found in Schistosoma japonicum (Blood fluke).